Here is a 463-residue protein sequence, read N- to C-terminus: Cysteine--tRNA ligase (463 aa).

Cysteine 33 contributes to the Zn(2+) binding site. The 'HIGH' region signature appears at 35–45 (PTVYDFAHIGN). Zn(2+)-binding residues include cysteine 221, histidine 246, and glutamate 250. The 'KMSKS' region signature appears at 279-283 (KMSKS). Residue lysine 282 participates in ATP binding.

This sequence belongs to the class-I aminoacyl-tRNA synthetase family. Monomer. The cofactor is Zn(2+).

The protein resides in the cytoplasm. The enzyme catalyses tRNA(Cys) + L-cysteine + ATP = L-cysteinyl-tRNA(Cys) + AMP + diphosphate. In Rhizobium johnstonii (strain DSM 114642 / LMG 32736 / 3841) (Rhizobium leguminosarum bv. viciae), this protein is Cysteine--tRNA ligase.